We begin with the raw amino-acid sequence, 317 residues long: L-lactate dehydrogenase (317 aa).

Residues Val17, Asp38, Lys43, Tyr69, and 83–84 (GA) each bind NAD(+). Gln86 and Arg92 together coordinate substrate. Residues Ser105, 122–124 (ATN), and Ser147 contribute to the NAD(+) site. 124-127 (NPVD) is a binding site for substrate. Substrate is bound at residue 152 to 155 (DTAR). Residues Arg157 and His172 each contribute to the beta-D-fructose 1,6-bisphosphate site. Catalysis depends on His179, which acts as the Proton acceptor. A Phosphotyrosine modification is found at Tyr224. Thr233 provides a ligand contact to substrate.

This sequence belongs to the LDH/MDH superfamily. LDH family. In terms of assembly, homotetramer.

The protein localises to the cytoplasm. It catalyses the reaction (S)-lactate + NAD(+) = pyruvate + NADH + H(+). The protein operates within fermentation; pyruvate fermentation to lactate; (S)-lactate from pyruvate: step 1/1. With respect to regulation, allosterically activated by fructose 1,6-bisphosphate (FBP). In terms of biological role, catalyzes the conversion of lactate to pyruvate. The protein is L-lactate dehydrogenase of Geobacillus thermodenitrificans (strain NG80-2).